We begin with the raw amino-acid sequence, 264 residues long: 3-methyl-2-oxobutanoate hydroxymethyltransferase (264 aa).

Mg(2+) contacts are provided by aspartate 45 and aspartate 84. 3-methyl-2-oxobutanoate-binding positions include 45 to 46 (DS), aspartate 84, and lysine 112. Mg(2+) is bound at residue glutamate 114. Glutamate 181 functions as the Proton acceptor in the catalytic mechanism.

It belongs to the PanB family. Homodecamer; pentamer of dimers. Mg(2+) is required as a cofactor.

The protein resides in the cytoplasm. It carries out the reaction 3-methyl-2-oxobutanoate + (6R)-5,10-methylene-5,6,7,8-tetrahydrofolate + H2O = 2-dehydropantoate + (6S)-5,6,7,8-tetrahydrofolate. Its pathway is cofactor biosynthesis; (R)-pantothenate biosynthesis; (R)-pantoate from 3-methyl-2-oxobutanoate: step 1/2. In terms of biological role, catalyzes the reversible reaction in which hydroxymethyl group from 5,10-methylenetetrahydrofolate is transferred onto alpha-ketoisovalerate to form ketopantoate. The sequence is that of 3-methyl-2-oxobutanoate hydroxymethyltransferase from Shewanella pealeana (strain ATCC 700345 / ANG-SQ1).